Here is a 350-residue protein sequence, read N- to C-terminus: MSKFVKKIKIIKPDDWHVHLRDNEILNQVIKYTGKFYKRAVIMPNLNSPITSCLKSIAYRNRILKSMHLNYKFKPLMTCYLTNSTSPKELEFGFSKKIFVAAKFYPNGCTTNSKTGIKKISDITPVLECMEKIGMPLLIHGEEINQNIDIYDREAKFIEKTLDPLRKKFPKLKIVLEHITTKESVEYIKNNDVNYLSATITPHHLMLNRNDMFYGGIQPYLYCLPILKKNKHRMALRKAISNGDKHFFLGSDTAPHLHKNKINMLGCAGIFNAPSSLLSYVKVFEEMRALKHLQSFCSENGPKFYNMPINKETITIIKKPCKIIKKINIGRNVIIPFLSGEILNWSIESD.

Residues histidine 17 and histidine 19 each contribute to the Zn(2+) site. Substrate is bound by residues histidine 19–arginine 21 and asparagine 45. Residues lysine 103, histidine 140, and histidine 178 each coordinate Zn(2+). At lysine 103 the chain carries N6-carboxylysine. Substrate is bound at residue histidine 140. Leucine 224 is a binding site for substrate. Aspartate 252 serves as a coordination point for Zn(2+). The active site involves aspartate 252. Substrate contacts are provided by histidine 256 and alanine 268.

The protein belongs to the metallo-dependent hydrolases superfamily. DHOase family. Class II DHOase subfamily. In terms of assembly, homodimer. Requires Zn(2+) as cofactor.

It carries out the reaction (S)-dihydroorotate + H2O = N-carbamoyl-L-aspartate + H(+). The protein operates within pyrimidine metabolism; UMP biosynthesis via de novo pathway; (S)-dihydroorotate from bicarbonate: step 3/3. Functionally, catalyzes the reversible cyclization of carbamoyl aspartate to dihydroorotate. In Buchnera aphidicola subsp. Acyrthosiphon pisum (strain 5A), this protein is Dihydroorotase.